The primary structure comprises 457 residues: DDB1- and CUL4-associated factor 10 (457 aa).

WD repeat units follow at residues 65-104, 108-146, 150-189, and 195-234; these read RTHG…HIKT, AHED…SKVC, GHTS…EDGC, and FHTR…KSLE. The segment covering 246–265 has biased composition (low complexity); that stretch reads TASTSDMTSTSSDTRPSSSP. Residues 246–304 are disordered; sequence TASTSDMTSTSSDTRPSSSPCHNSDLGPLFEKHMSRSSQREGASPRNSLEVLTPEVPGE. Residues 281–292 show a composition bias toward polar residues; it reads RSSQREGASPRN. WD repeat units lie at residues 306–346, 368–406, and 424–457; these read DRGN…QEGA, VGRG…KELV, and SHKD…QPKF.

This sequence belongs to the WD repeat DCAF10 family.

The protein operates within protein modification; protein ubiquitination. Functionally, may function as a substrate receptor for CUL4-DDB1 E3 ubiquitin-protein ligase complex. The chain is DDB1- and CUL4-associated factor 10 (dcaf10) from Xenopus tropicalis (Western clawed frog).